Consider the following 397-residue polypeptide: Elongation factor Tu (397 aa).

Residues 10–207 form the tr-type G domain; the sequence is KPHCNIGTIG…AVDEWIPQPE (198 aa). The G1 stretch occupies residues 19–26; sequence GHVDHGKT. 19–26 provides a ligand contact to GTP; sequence GHVDHGKT. Threonine 26 contributes to the Mg(2+) binding site. Positions 61–65 are G2; that stretch reads GITIS. The interval 82–85 is G3; the sequence is DCPG. GTP is bound by residues 82-86 and 137-140; these read DCPGH and NKVD. A G4 region spans residues 137–140; the sequence is NKVD. Positions 175 to 177 are G5; that stretch reads SAL.

Belongs to the TRAFAC class translation factor GTPase superfamily. Classic translation factor GTPase family. EF-Tu/EF-1A subfamily. As to quaternary structure, monomer.

It is found in the cytoplasm. The catalysed reaction is GTP + H2O = GDP + phosphate + H(+). GTP hydrolase that promotes the GTP-dependent binding of aminoacyl-tRNA to the A-site of ribosomes during protein biosynthesis. The polypeptide is Elongation factor Tu (Sphingopyxis alaskensis (strain DSM 13593 / LMG 18877 / RB2256) (Sphingomonas alaskensis)).